The sequence spans 380 residues: Cytochrome b (380 aa).

4 consecutive transmembrane segments (helical) span residues 34–54 (FGSLLGICLLTQILTGLLLAM), 78–99 (WLIRNLHANGASFFFICIYLHI), 114–134 (WNTGVILLLTLMATAFVGYVL), and 179–199 (FFALHFLLPFMIAGLTLIHLT). 2 residues coordinate heme b: His84 and His98. Heme b is bound by residues His183 and His197. His202 is an a ubiquinone binding site. Transmembrane regions (helical) follow at residues 227-247 (LKDILGFMLLLLPLTTLALFS), 289-309 (LGGVLALAASVLVLFLAPFLH), 321-341 (ISQLLFWILVANLFILTWVGS), and 348-368 (FIIIGQLASLTYFTILLILFP).

This sequence belongs to the cytochrome b family. In terms of assembly, the cytochrome bc1 complex contains 11 subunits: 3 respiratory subunits (MT-CYB, CYC1 and UQCRFS1), 2 core proteins (UQCRC1 and UQCRC2) and 6 low-molecular weight proteins (UQCRH/QCR6, UQCRB/QCR7, UQCRQ/QCR8, UQCR10/QCR9, UQCR11/QCR10 and a cleavage product of UQCRFS1). This cytochrome bc1 complex then forms a dimer. Heme b is required as a cofactor.

Its subcellular location is the mitochondrion inner membrane. Its function is as follows. Component of the ubiquinol-cytochrome c reductase complex (complex III or cytochrome b-c1 complex) that is part of the mitochondrial respiratory chain. The b-c1 complex mediates electron transfer from ubiquinol to cytochrome c. Contributes to the generation of a proton gradient across the mitochondrial membrane that is then used for ATP synthesis. This is Cytochrome b (MT-CYB) from Puffinus opisthomelas (Black-vented shearwater).